A 216-amino-acid chain; its full sequence is LexA repressor (216 aa).

Residues Arg-29 to Lys-49 constitute a DNA-binding region (H-T-H motif). Residues Ser-134 and Lys-171 each act as for autocatalytic cleavage activity in the active site.

The protein belongs to the peptidase S24 family. Homodimer.

The enzyme catalyses Hydrolysis of Ala-|-Gly bond in repressor LexA.. Represses a number of genes involved in the response to DNA damage (SOS response), including recA and lexA. In the presence of single-stranded DNA, RecA interacts with LexA causing an autocatalytic cleavage which disrupts the DNA-binding part of LexA, leading to derepression of the SOS regulon and eventually DNA repair. The sequence is that of LexA repressor from Bordetella bronchiseptica (strain ATCC BAA-588 / NCTC 13252 / RB50) (Alcaligenes bronchisepticus).